Consider the following 85-residue polypeptide: MTFGKQADPDLTKLLDKKLAIKLNGNRTVHGILRGFDTFMNIALKDTVEVVSPTEKYEIGMVIIRGNSILLMEPLESMAYVPKTE.

In terms of domain architecture, Sm spans 6-78 (QADPDLTKLL…ILLMEPLESM (73 aa)).

This sequence belongs to the snRNP Sm proteins family. Core component of the spliceosomal U1, U2, U4 and U5 small nuclear ribonucleoproteins (snRNPs), the building blocks of the spliceosome. Most spliceosomal snRNPs contain a common set of Sm proteins, SNRPB, SNRPD1, SNRPD2, SNRPD3, SNRPE, SNRPF and SNRPG that assemble in a heptameric protein ring on the Sm site of the small nuclear RNA to form the core snRNP. Component of the U1 snRNP. Component of the U4/U6-U5 tri-snRNP complex. Component of the U7 snRNP complex. Component of the U11/U12 snRNPs that are part of the U12-type spliceosome.

The protein resides in the cytoplasm. Its subcellular location is the cytosol. It is found in the nucleus. In terms of biological role, plays a role in pre-mRNA splicing as a core component of the spliceosomal U1, U2, U4 and U5 small nuclear ribonucleoproteins (snRNPs), the building blocks of the spliceosome. Component of both the pre-catalytic spliceosome B complex and activated spliceosome C complexes. Is also a component of the minor U12 spliceosome. The chain is Probable small nuclear ribonucleoprotein G (snrpG) from Dictyostelium discoideum (Social amoeba).